Here is a 222-residue protein sequence, read N- to C-terminus: Ribonuclease 3 (222 aa).

Positions 3–125 (SQSVAKKLNH…LFGAIYLDAG (123 aa)) constitute an RNase III domain. Position 38 (E38) interacts with Mg(2+). D42 is an active-site residue. Mg(2+) contacts are provided by D111 and E114. Residue E114 is part of the active site. One can recognise a DRBM domain in the interval 152–222 (DAKTRLQEWL…AEKALKELLA (71 aa)).

It belongs to the ribonuclease III family. As to quaternary structure, homodimer. Mg(2+) serves as cofactor.

The protein localises to the cytoplasm. It catalyses the reaction Endonucleolytic cleavage to 5'-phosphomonoester.. Digests double-stranded RNA. Involved in the processing of primary rRNA transcript to yield the immediate precursors to the large and small rRNAs (23S and 16S). Processes some mRNAs, and tRNAs when they are encoded in the rRNA operon. Processes pre-crRNA and tracrRNA of type II CRISPR loci if present in the organism. The chain is Ribonuclease 3 from Dechloromonas aromatica (strain RCB).